The chain runs to 488 residues: UDP-N-acetylmuramate--L-alanine ligase (488 aa).

127–133 (GTHGKTT) contacts ATP.

This sequence belongs to the MurCDEF family.

It is found in the cytoplasm. It carries out the reaction UDP-N-acetyl-alpha-D-muramate + L-alanine + ATP = UDP-N-acetyl-alpha-D-muramoyl-L-alanine + ADP + phosphate + H(+). Its pathway is cell wall biogenesis; peptidoglycan biosynthesis. Functionally, cell wall formation. The chain is UDP-N-acetylmuramate--L-alanine ligase from Shewanella sp. (strain ANA-3).